A 526-amino-acid chain; its full sequence is Butyrophilin subfamily 1 member A1 (526 aa).

The N-terminal stretch at 1–26 (MAVFPSSGLPRCLLTLILLQLPKLDS) is a signal peptide. Ig-like V-type domains are found at residues 27–138 (APFD…ALVH) and 148–234 (PHIS…VEIS). Residues 27 to 242 (APFDVIGPPE…ISIPASSLPR (216 aa)) are Extracellular-facing. 2 disulfide bridges follow: Cys-50–Cys-124 and Cys-164–Cys-218. 2 N-linked (GlcNAc...) asparagine glycosylation sites follow: Asn-55 and Asn-215. Residues 243–269 (LTPWIVAVAVILMVLGLLTIGSIFFTW) form a helical membrane-spanning segment. Topologically, residues 270–526 (RLYNERPRER…IPTQPSQGAP (257 aa)) are cytoplasmic. Positions 285-479 (SKERLLEELK…LTICPIADGP (195 aa)) constitute a B30.2/SPRY domain. Residues 495–526 (IPLSPMGEDSAPRDADTLHSKLIPTQPSQGAP) are disordered. Positions 504 to 513 (SAPRDADTLH) are enriched in basic and acidic residues. The segment covering 517 to 526 (IPTQPSQGAP) has biased composition (polar residues).

Belongs to the immunoglobulin superfamily. BTN/MOG family. As to quaternary structure, seems to associate with xanthine dehydrogenase/oxidase. N-glycosylated.

Its subcellular location is the membrane. The protein resides in the secreted. Its function is as follows. May function in the secretion of milk-fat droplets. May act as a specific membrane-associated receptor for the association of cytoplasmic droplets with the apical plasma membrane. Inhibits the proliferation of CD4 and CD8 T-cells activated by anti-CD3 antibodies, T-cell metabolism and IL2 and IFNG secretion. The polypeptide is Butyrophilin subfamily 1 member A1 (BTN1A1) (Homo sapiens (Human)).